A 185-amino-acid polypeptide reads, in one-letter code: Ribosome-recycling factor (185 aa).

The protein belongs to the RRF family.

Its subcellular location is the cytoplasm. In terms of biological role, responsible for the release of ribosomes from messenger RNA at the termination of protein biosynthesis. May increase the efficiency of translation by recycling ribosomes from one round of translation to another. This is Ribosome-recycling factor from Brevibacillus brevis (strain 47 / JCM 6285 / NBRC 100599).